Reading from the N-terminus, the 198-residue chain is Pyridoxal 5'-phosphate synthase subunit PdxT (198 aa).

Residue 49 to 51 coordinates L-glutamine; it reads GES. Cysteine 81 serves as the catalytic Nucleophile. L-glutamine contacts are provided by residues arginine 112 and 140–141; that span reads IR. Residues histidine 176 and glutamate 178 each act as charge relay system in the active site.

Belongs to the glutaminase PdxT/SNO family. In the presence of PdxS, forms a dodecamer of heterodimers. Only shows activity in the heterodimer.

It carries out the reaction aldehydo-D-ribose 5-phosphate + D-glyceraldehyde 3-phosphate + L-glutamine = pyridoxal 5'-phosphate + L-glutamate + phosphate + 3 H2O + H(+). The enzyme catalyses L-glutamine + H2O = L-glutamate + NH4(+). Its pathway is cofactor biosynthesis; pyridoxal 5'-phosphate biosynthesis. Its function is as follows. Catalyzes the hydrolysis of glutamine to glutamate and ammonia as part of the biosynthesis of pyridoxal 5'-phosphate. The resulting ammonia molecule is channeled to the active site of PdxS. The chain is Pyridoxal 5'-phosphate synthase subunit PdxT from Methanocella arvoryzae (strain DSM 22066 / NBRC 105507 / MRE50).